We begin with the raw amino-acid sequence, 160 residues long: Envelope glycoprotein L (160 aa).

Positions 1–22 are cleaved as a signal peptide; that stretch reads MASHKWLLQMIVFLKTITIAYC. The segment at 24 to 149 is interaction with gH; that stretch reads HLQDDTPLFF…TNIPENGCVW (126 aa). The 133-residue stretch at 28–160 folds into the gL alphaherpesvirus-type domain; it reads DTPLFFGAKP…ADRLFQRVCQ (133 aa). Disulfide bonds link Cys49–Cys80 and Cys147–Cys159.

This sequence belongs to the herpesviridae glycoprotein L (gL) family. Alphaherpesvirinae gL subfamily. As to quaternary structure, interacts with glycoprotein H (gH); this interaction is necessary for the correct processing and cell surface expression of gH. The heterodimer gH/gL seems to interact with gB trimers during fusion.

It is found in the virion membrane. The protein localises to the host cell membrane. The protein resides in the host Golgi apparatus. Its subcellular location is the host trans-Golgi network. In terms of biological role, the heterodimer glycoprotein H-glycoprotein L is required for the fusion of viral and plasma membranes leading to virus entry into the host cell. Acts as a functional inhibitor of gH and maintains gH in an inhibited form. Upon binding to host integrins, gL dissociates from gH leading to activation of the viral fusion glycoproteins gB and gH. This chain is Envelope glycoprotein L, found in Varicella-zoster virus (strain Oka vaccine) (HHV-3).